The primary structure comprises 192 residues: GTP cyclohydrolase-2 (192 aa).

Residue 50–54 (RLHSE) participates in GTP binding. Cys-55, Cys-66, and Cys-68 together coordinate Zn(2+). GTP is bound by residues 92-94 (EGR) and Thr-114. Asp-126 serves as the catalytic Proton acceptor. The active-site Nucleophile is Arg-128. The GTP site is built by Thr-149 and Lys-154.

Belongs to the GTP cyclohydrolase II family. Requires Zn(2+) as cofactor.

It carries out the reaction GTP + 4 H2O = 2,5-diamino-6-hydroxy-4-(5-phosphoribosylamino)-pyrimidine + formate + 2 phosphate + 3 H(+). It participates in cofactor biosynthesis; riboflavin biosynthesis; 5-amino-6-(D-ribitylamino)uracil from GTP: step 1/4. Catalyzes the conversion of GTP to 2,5-diamino-6-ribosylamino-4(3H)-pyrimidinone 5'-phosphate (DARP), formate and pyrophosphate. The polypeptide is GTP cyclohydrolase-2 (Helicobacter pylori (strain P12)).